The following is a 157-amino-acid chain: Endoribonuclease YbeY (157 aa).

His-114, His-118, and His-124 together coordinate Zn(2+).

Belongs to the endoribonuclease YbeY family. Zn(2+) is required as a cofactor.

The protein localises to the cytoplasm. Single strand-specific metallo-endoribonuclease involved in late-stage 70S ribosome quality control and in maturation of the 3' terminus of the 16S rRNA. The protein is Endoribonuclease YbeY of Yersinia enterocolitica serotype O:8 / biotype 1B (strain NCTC 13174 / 8081).